The chain runs to 496 residues: Probable chlorophyll(ide) b reductase NYC1, chloroplastic (496 aa).

Residues 1–43 constitute a chloroplast transit peptide; it reads MTTLTKIQVYPQVLEHRLFFRDPIRVGSRLTCRERSNRVYVHR. A run of 2 helical transmembrane segments spans residues 105–125 and 132–152; these read YIVT…LSGG and LVWY…ANMV. NAD(+) is bound at residue 166–190; the sequence is ITGSTRGLGKALAREFLLSGDRVIV. The stretch at 195–224 forms a coiled coil; that stretch reads SESVDMTVKELEQNLKEIMSNASESARKKL. Y330 (proton acceptor) is an active-site residue. The helical transmembrane segment at 470–490 threads the bilayer; it reads WVSVFSLSVVCAFIILQSTTP.

Belongs to the short-chain dehydrogenases/reductases (SDR) family. Interacts with NOL to form a complex that acts as a chlorophyll b reductase. Interacts with HCAR, RCCR, SGR1 and the LHCII complex. Part of a SGR1-CCE-LHCII complex, which acts in chlorophyll breakdown.

The protein resides in the plastid. It is found in the chloroplast thylakoid membrane. It carries out the reaction 7(1)-hydroxychlorophyllide a + NAD(+) = chlorophyllide b + NADH + H(+). It catalyses the reaction 7(1)-hydroxychlorophyllide a + NADP(+) = chlorophyllide b + NADPH + H(+). Its function is as follows. Involved in chlorophyll b degradation. Belongs to the chlorophyll catabolic enzymes (CCEs). The protein is Probable chlorophyll(ide) b reductase NYC1, chloroplastic (NYC1) of Arabidopsis thaliana (Mouse-ear cress).